The sequence spans 397 residues: Vacuolar protein sorting-associated protein 37A (397 aa).

Residues 1-22 form a disordered region; it reads MSWLFPLTKSASSSAAGSPGGL. The residue at position 18 (serine 18) is a Phosphoserine. In terms of domain architecture, VPS37 C-terminal spans 308-397; it reads KSTFEKKMQR…AMHSQFHAPL (90 aa).

The protein belongs to the VPS37 family. In terms of assembly, component of the ESCRT-I complex (endosomal sorting complex required for transport I) which consists of TSG101, VPS28, a VPS37 protein (VPS37A to -D) and MVB12A or MVB12B in a 1:1:1:1 stoichiometry. Interacts with TSG101, VPS28 and HGS. Component of an ESCRT-I complex (endosomal sorting complex required for transport I) which consists of TSG101, VPS28, VPS37A and UBAP1 in a 1:1:1:1 stoichiometry. In terms of tissue distribution, widely expressed. Examined tissues include heart, brain, placenta, liver, skeletal muscle, kidney and pancreas. More abundant in liver. Strongly decreased or undetected in hepatomas.

It localises to the late endosome membrane. The protein resides in the nucleus. Its function is as follows. Component of the ESCRT-I complex, a regulator of vesicular trafficking process. Required for the sorting of endocytic ubiquitinated cargos into multivesicular bodies. May be involved in cell growth and differentiation. This Homo sapiens (Human) protein is Vacuolar protein sorting-associated protein 37A (VPS37A).